Reading from the N-terminus, the 449-residue chain is Packaging protein 1 (449 aa).

The tract at residues 1–77 is disordered; sequence METRGRRPAA…QPAKRGDMLD (77 aa). 171–178 is a binding site for ATP; sequence GPTGCGKS. Positions 440–449 are DNA-binding; sequence RAYRARKTPK.

Belongs to the adenoviridae packaging protein 1 family. Homodimer. Part of a genome packaging complex composed of packaging proteins 1, 2 and 3; this complex specifically binds to the packaging sequence on the left end of viral genomic DNA and performs packaging of the viral genome. Interacts with protein 33K.

Its subcellular location is the virion. It localises to the host nucleus. It is found in the host nucleoplasm. The protein resides in the host nucleolus. Component of the packaging machinery which encapsidates the viral DNA into preformed capsids and transcriptional activator of the viral major late promoter (MLP). Binds, along with packaging proteins 2 and 3, to the specific packaging sequence on the left end of viral genomic DNA and displays ATPase activity thereby providing the power stroke of the packaging machinery. The activity of packaging protein IVa2 is stimulated by protein 33K which acts as a terminase. May be the protein that pumps DNA into the capsid powered by ATP hydrolysis. Specifically binds to the 5'-CG-3' nucleotides of the repeats making up the packaging sequence. Component of the DEF-A and DEF-B transcription factors that bind downstream elements of the major late promoter (MLP), and stimulate transcription from the MLP after initiation of viral DNA replication. DEF-A is a heterodimer packaging proteins 1 and 2 and DEF-B is a homodimer of packaging protein 1. The chain is Packaging protein 1 from Homo sapiens (Human).